The chain runs to 930 residues: RNA-binding protein 10 (930 aa).

Basic and acidic residues-rich tracts occupy residues Met1 to Gly14 and Arg21 to Pro45. Residues Met1–Ala127 form a disordered region. Acidic residues predominate over residues Asp59–Tyr70. Phosphoserine occurs at positions 61 and 89. Positions Arg80–Ser89 are enriched in basic residues. The span at Arg98–Gln111 shows a compositional bias: basic and acidic residues. Over residues Gly112–Glu125 the composition is skewed to acidic residues. The RRM 1 domain maps to Asn129–Pro209. The RanBP2-type zinc-finger motif lies at Lys212 to Glu242. Residues Asp300–Gly384 form the RRM 2 domain. Position 383 is an N6-acetyllysine (Lys383). Disordered stretches follow at residues Gly464–Ala487, Ala503–Asn522, Glu537–Val566, Glu620–Lys646, and Asp712–Leu753. The span at Tyr507–Asn522 shows a compositional bias: polar residues. Over residues Ser540–Ser562 the composition is skewed to low complexity. The span at Ala623 to Lys639 shows a compositional bias: basic and acidic residues. Phosphoserine is present on residues Ser718, Ser723, Ser733, Ser736, and Ser738. Residues Glu743–Leu753 are compositionally biased toward basic and acidic residues. The C2H2-type; atypical zinc finger occupies Leu759–His784. Phosphoserine occurs at positions 781, 797, and 845. Residues Ala818–Ile861 are disordered. One can recognise a G-patch domain in the interval Ser858–Ser904. An Omega-N-methylarginine modification is found at Arg902.

In terms of assembly, associates with the spliceosome. Component of a large chromatin remodeling complex, at least composed of MYSM1, PCAF, RBM10 and KIF11/TRIP5.

Its subcellular location is the nucleus. In terms of biological role, binds to ssRNA containing the consensus sequence 5'-AGGUAA-3'. May be involved in post-transcriptional processing, most probably in mRNA splicing. Binds to RNA homopolymers, with a preference for poly(G) and poly(U) and little for poly(A). May bind to specific miRNA hairpins. The sequence is that of RNA-binding protein 10 from Mus musculus (Mouse).